A 217-amino-acid chain; its full sequence is 3,4-dihydroxy-2-butanone 4-phosphate synthase (217 aa).

D-ribulose 5-phosphate-binding positions include 37-38, aspartate 42, 150-154, and glutamate 174; these read RE and RRGHT. Residue glutamate 38 coordinates Mg(2+). A Mg(2+)-binding site is contributed by histidine 153.

Belongs to the DHBP synthase family. Homodimer. The cofactor is Mg(2+). Mn(2+) is required as a cofactor.

The catalysed reaction is D-ribulose 5-phosphate = (2S)-2-hydroxy-3-oxobutyl phosphate + formate + H(+). Its pathway is cofactor biosynthesis; riboflavin biosynthesis; 2-hydroxy-3-oxobutyl phosphate from D-ribulose 5-phosphate: step 1/1. Catalyzes the conversion of D-ribulose 5-phosphate to formate and 3,4-dihydroxy-2-butanone 4-phosphate. The polypeptide is 3,4-dihydroxy-2-butanone 4-phosphate synthase (Shewanella putrefaciens (strain CN-32 / ATCC BAA-453)).